The following is a 338-amino-acid chain: Glycerol-1-phosphate dehydrogenase [NAD(P)+] (338 aa).

NAD(+)-binding positions include G81 to D85 and T103 to S106. D108 is a substrate binding site. Residue S112 participates in NAD(+) binding. D157 is a binding site for substrate. D157 and H238 together coordinate Zn(2+). H242 provides a ligand contact to substrate. Residue H256 coordinates Zn(2+).

Belongs to the glycerol-1-phosphate dehydrogenase family. In terms of assembly, homodimer. Zn(2+) is required as a cofactor.

The protein resides in the cytoplasm. It catalyses the reaction sn-glycerol 1-phosphate + NAD(+) = dihydroxyacetone phosphate + NADH + H(+). The catalysed reaction is sn-glycerol 1-phosphate + NADP(+) = dihydroxyacetone phosphate + NADPH + H(+). It functions in the pathway membrane lipid metabolism; glycerophospholipid metabolism. Functionally, catalyzes the NAD(P)H-dependent reduction of dihydroxyacetonephosphate (DHAP or glycerone phosphate) to glycerol 1-phosphate (G1P). The G1P thus generated is used as the glycerophosphate backbone of phospholipids in the cellular membranes of Archaea. The sequence is that of Glycerol-1-phosphate dehydrogenase [NAD(P)+] from Pyrobaculum calidifontis (strain DSM 21063 / JCM 11548 / VA1).